The chain runs to 210 residues: Imidazole glycerol phosphate synthase subunit HisH (210 aa).

Positions 7 to 210 constitute a Glutamine amidotransferase type-1 domain; it reads KVVIIDTGCA…SQLIKNFLEM (204 aa). Catalysis depends on cysteine 82, which acts as the Nucleophile. Residues histidine 192 and glutamate 194 contribute to the active site.

In terms of assembly, heterodimer of HisH and HisF.

Its subcellular location is the cytoplasm. It carries out the reaction 5-[(5-phospho-1-deoxy-D-ribulos-1-ylimino)methylamino]-1-(5-phospho-beta-D-ribosyl)imidazole-4-carboxamide + L-glutamine = D-erythro-1-(imidazol-4-yl)glycerol 3-phosphate + 5-amino-1-(5-phospho-beta-D-ribosyl)imidazole-4-carboxamide + L-glutamate + H(+). The catalysed reaction is L-glutamine + H2O = L-glutamate + NH4(+). Its pathway is amino-acid biosynthesis; L-histidine biosynthesis; L-histidine from 5-phospho-alpha-D-ribose 1-diphosphate: step 5/9. Functionally, IGPS catalyzes the conversion of PRFAR and glutamine to IGP, AICAR and glutamate. The HisH subunit catalyzes the hydrolysis of glutamine to glutamate and ammonia as part of the synthesis of IGP and AICAR. The resulting ammonia molecule is channeled to the active site of HisF. The sequence is that of Imidazole glycerol phosphate synthase subunit HisH from Photobacterium profundum (strain SS9).